A 163-amino-acid chain; its full sequence is T-cell surface glycoprotein CD3 zeta chain (163 aa).

Residues 1-21 (MKWKALFTAAILQAQLPITEA) form the signal peptide. Over 22-30 (QSFGLLDPK) the chain is Extracellular. The chain crosses the membrane as a helical span at residues 31-51 (LCYLLDGILFIYGVILTALFL). Residues 52–163 (RVKFSRSADA…ALHMQALPPR (112 aa)) are Cytoplasmic-facing. The residue at position 58 (Ser-58) is a Phosphoserine. 3 consecutive ITAM domains span residues 61–89 (APAY…LDKR), 99–127 (KPRR…EIGM), and 130–158 (ERRR…LHMQ). Residues Tyr-64, Tyr-72, Tyr-83, Tyr-110, Tyr-122, Tyr-141, and Tyr-152 each carry the phosphotyrosine modification. Residues 83-98 (YDVLDKRRGRDPEMGG) are compositionally biased toward basic and acidic residues. Residues 83 to 111 (YDVLDKRRGRDPEMGGKPRRKNPQEGLYN) form a disordered region.

This sequence belongs to the CD3Z/FCER1G family. In terms of assembly, the TCR-CD3 complex is composed of a CD3D/CD3E and a CD3G/CD3E heterodimers that preferentially associate with TCRalpha and TCRbeta, respectively, to form TCRalpha/CD3E/CD3G and TCRbeta/CD3G/CD3E trimers. In turn, the hexamer interacts with CD3Z homodimer to form the TCR-CD3 complex. Alternatively, TCRalpha and TCRbeta can be replaced by TCRgamma and TCRdelta. Interacts with SLA. Interacts with TRAT1. Interacts with DOCK2. Interacts with SLA2. Interacts with SHB. Interacts with ZAP70. Interacts (tyrosine phosphorylated) with SHC1 (via SH2 domain). Interacts with PTPRC. Interacts with CRK; this interaction regulates CD3Z phosphorylation. Interacts (on T cell side) with CD81, ICAM1 and CD9 at immunological synapses between antigen-presenting cells and T cells. Interacts with CD160. Interacts with LY6E. Interacts with LY6E. The signaling subunit of immunoglobulin gamma (IgG) Fc receptor complex. As a homodimer or a heterodimer with FCER1G, associates with the ligand binding subunit FCGR3A (via transmembrane domain); this interaction is a prerequisite for Fc receptor complex expression on the cell surface. Interacts with CD5. Post-translationally, phosphorylated on Tyr residues after T-cell receptor triggering by LCK in association with CD4/CD8.

Its subcellular location is the cell membrane. In terms of biological role, part of the TCR-CD3 complex present on T-lymphocyte cell surface that plays an essential role in adaptive immune response. When antigen presenting cells (APCs) activate T-cell receptor (TCR), TCR-mediated signals are transmitted across the cell membrane by the CD3 chains CD3D, CD3E, CD3G and CD3Z. All CD3 chains contain immunoreceptor tyrosine-based activation motifs (ITAMs) in their cytoplasmic domain. Upon TCR engagement, these motifs become phosphorylated by Src family protein tyrosine kinases LCK and FYN, resulting in the activation of downstream signaling pathways. CD3Z ITAMs phosphorylation creates multiple docking sites for the protein kinase ZAP70 leading to ZAP70 phosphorylation and its conversion into a catalytically active enzyme. Plays an important role in intrathymic T-cell differentiation. Additionally, participates in the activity-dependent synapse formation of retinal ganglion cells (RGCs) in both the retina and dorsal lateral geniculate nucleus (dLGN). The sequence is that of T-cell surface glycoprotein CD3 zeta chain (CD247) from Sus scrofa (Pig).